A 494-amino-acid chain; its full sequence is Nicotianamine aminotransferase 1 (494 aa).

Low complexity-rich tracts occupy residues 24–38 (SGTS…TSSS) and 48–62 (STAM…AASS). Residues 24–76 (SGTSYPTRTTTTSSSAPEFTNKKQSTAMAPTTAAAAASSNGGGESDGSSKEWR) are disordered. Lys322 carries the N6-(pyridoxal phosphate)lysine modification.

The protein belongs to the class-I pyridoxal-phosphate-dependent aminotransferase family. Requires pyridoxal 5'-phosphate as cofactor. Expressed in companion and pericycle cells adjacent to the protoxylem of roots. Expressed in companion cells of shoots.

It catalyses the reaction nicotianamine + 2-oxoglutarate = 3''-deamino-3''-oxonicotianamine + L-glutamate. Involved in biosynthesis of mugineic acid family phytosiderophores, which are ferric iron chelators produced in graminaceous plants in response to iron deficiency. In Oryza sativa subsp. japonica (Rice), this protein is Nicotianamine aminotransferase 1.